A 605-amino-acid polypeptide reads, in one-letter code: Microtubule-associated protein VP10 (605 aa).

As to quaternary structure, interacts with VP1.

Its subcellular location is the virion. The protein localises to the host cytoplasm. It localises to the host cytoskeleton. Functionally, minor inner capsid component. Displays NTPase and RNA 5'-triphosphatase (RTPase) activities. May function as a cofactor of polymerase VP1. Associates with microtubules and plays a role in the formation, structural organization and morphology of viral inclusions, where the assembly of cores and the replication of viral RNA occur. The chain is Microtubule-associated protein VP10 from Colorado tick fever virus (strain USA/Florio N-7180) (CTFV).